The chain runs to 865 residues: Eukaryotic translation initiation factor 3 subunit C (865 aa).

2 disordered regions span residues 1 to 92 (MSRF…AKDK) and 206 to 243 (EDEEEPAPKPKKAAKVSFDEATAEDEEDDEGFARVGKG). Composition is skewed to acidic residues over residues 16-54 (SSDEEELYSEEEEEELEDEGDDSDNDGSGDDDSDSDSDA) and 69-80 (DDDSSDEEDSDA). Residues 82–92 (VTTKVKSAKDK) show a composition bias toward basic and acidic residues. Acidic residues predominate over residues 226 to 235 (ATAEDEEDDE). In terms of domain architecture, PCI spans 606–780 (FHMHINLELL…QTVIFRKGVE (175 aa)). The tract at residues 801 to 865 (SNERTLEQRT…GGALGAAVRA (65 aa)) is disordered. A compositionally biased stretch (polar residues) spans 808 to 817 (QRTQGTSNAF). Positions 822–841 (GRGGRGGGRGRGGGRGGPRF) are enriched in gly residues.

This sequence belongs to the eIF-3 subunit C family. In terms of assembly, component of the eukaryotic translation initiation factor 3 (eIF-3) complex.

The protein resides in the cytoplasm. In terms of biological role, component of the eukaryotic translation initiation factor 3 (eIF-3) complex, which is involved in protein synthesis of a specialized repertoire of mRNAs and, together with other initiation factors, stimulates binding of mRNA and methionyl-tRNAi to the 40S ribosome. The eIF-3 complex specifically targets and initiates translation of a subset of mRNAs involved in cell proliferation. The protein is Eukaryotic translation initiation factor 3 subunit C of Pyricularia oryzae (strain 70-15 / ATCC MYA-4617 / FGSC 8958) (Rice blast fungus).